The sequence spans 296 residues: Telomere repeat-binding factor 4 (296 aa).

The 62-residue stretch at 1-62 (MGNQKLKWTA…WRNLSVAPGI (62 aa)) folds into the HTH myb-type domain. The segment at residues 28-58 (WKNILRDPELAEQLSSRSNIDLKDKWRNLSV) is a DNA-binding region (H-T-H motif). The 75-residue stretch at 126-200 (NAPRYDGMIF…STQNFYKMND (75 aa)) folds into the H15 domain. Residues 197–232 (KMNDNSLVQRTPHVARPKESNTKSRQQTNSQGPSIS) are disordered. Over residues 219 to 232 (KSRQQTNSQGPSIS) the composition is skewed to polar residues. Residues 245-282 (KLVEVENKLDVSKGAAEEIERLMKLAEEADEMLVIARE) adopt a coiled-coil conformation.

Belongs to the histone H1/H5 family. SMH subfamily.

The protein resides in the nucleus. It localises to the chromosome. Functionally, binds preferentially double-stranded telomeric repeats. The polypeptide is Telomere repeat-binding factor 4 (Arabidopsis thaliana (Mouse-ear cress)).